A 293-amino-acid polypeptide reads, in one-letter code: Membrane protein RL13 (293 aa).

The N-terminal stretch at Met1–Cys19 is a signal peptide. A helical transmembrane segment spans residues Ile245–Leu265.

Its subcellular location is the virion membrane. Its function is as follows. May play a role in modifying tropism or in modulating cell signaling during virus entry. Since RL13 expression severely impairs HCMV replication in epithelial cell cultures, it may act as a regulator promoting persistence by suppressing the switch to fully lytic infection. This Human cytomegalovirus (strain Merlin) (HHV-5) protein is Membrane protein RL13 (RL13).